The following is a 436-amino-acid chain: Trigger factor (436 aa).

Residues glycine 162–proline 247 form the PPIase FKBP-type domain.

It belongs to the FKBP-type PPIase family. Tig subfamily.

Its subcellular location is the cytoplasm. The enzyme catalyses [protein]-peptidylproline (omega=180) = [protein]-peptidylproline (omega=0). In terms of biological role, involved in protein export. Acts as a chaperone by maintaining the newly synthesized protein in an open conformation. Functions as a peptidyl-prolyl cis-trans isomerase. The polypeptide is Trigger factor (Neisseria gonorrhoeae (strain ATCC 700825 / FA 1090)).